The chain runs to 318 residues: 2-dehydro-3-deoxygalactonokinase (318 aa).

Substrate-binding positions include 35-39 (GAESN), Tyr-90, 105-107 (YDR), and Arg-169. Residues 167 to 169 (NYR), 228 to 233 (TRGEDG), and 257 to 260 (GTGD) contribute to the ATP site. Asp-260 and Asp-296 together coordinate substrate. The Proton acceptor role is filled by Asp-260.

Belongs to the carbohydrate kinase PfkB family. Homohexamer.

The catalysed reaction is 2-dehydro-3-deoxy-D-galactonate + ATP = 2-dehydro-3-deoxy-6-phospho-D-galactonate + ADP + H(+). Functionally, involved in galactose catabolism. Catalyzes the phosphorylation of 2-keto-3-deoxygalactonate (KDGal) to produce 2-keto-3-deoxy-6-phosphogalactonate (KDPGal). Can also phosphorylate 2-keto-3-deoxygluconate (KDG) to 2-keto-3-deoxy-6-phosphogluconate (KDPG), but the catalytic efficiency for KDGal is 50-fold higher than for KDG. The polypeptide is 2-dehydro-3-deoxygalactonokinase (Haloferax volcanii (strain ATCC 29605 / DSM 3757 / JCM 8879 / NBRC 14742 / NCIMB 2012 / VKM B-1768 / DS2) (Halobacterium volcanii)).